Here is a 71-residue protein sequence, read N- to C-terminus: Small ribosomal subunit protein bS21 (71 aa).

Over residues 49 to 59 (AAAAVKRHAKK) the composition is skewed to basic residues. Residues 49 to 71 (AAAAVKRHAKKVQREQRRSVRLY) form a disordered region. Positions 60–71 (VQREQRRSVRLY) are enriched in basic and acidic residues.

This sequence belongs to the bacterial ribosomal protein bS21 family.

The polypeptide is Small ribosomal subunit protein bS21 (Stutzerimonas stutzeri (strain A1501) (Pseudomonas stutzeri)).